The following is a 956-amino-acid chain: Zinc fingers and homeoboxes protein 3 (956 aa).

Residues 1–107 (MASKRKSTTP…SEHTDFNKDP (107 aa)) are required for nuclear localization. The interval 22-66 (DASMEAQPAETLPEGPQQDLPPEASAASSEAAQNPSSTDGSTLAN) is disordered. A compositionally biased stretch (low complexity) spans 42 to 58 (PPEASAASSEAAQNPSS). C2H2-type zinc fingers lie at residues 77-100 (YSCKYCDFRSHDMTQFVGHMNSEH) and 109-132 (FVCSGCSFLAKTPEGLSLHNATCH). Positions 242 to 488 (ASASSAKNPH…LLTACPSITS (247 aa)) are required for homodimerization and interaction with NFYA. Residues 303–502 (LSSIPTYNAA…DASIYKNKKS (200 aa)) are required for repressor activity. 2 DNA-binding regions (homeobox) span residues 304-363 (SSIP…GISW) and 494-553 (ASIY…RNLK). Residues 497-555 (YKNKKSHEQLSALKGSFCRNQFPGQSEVEHLTKVTGLSTREVRKWFSDRRYHCRNLKGS) are required for nuclear localization. 2 disordered regions span residues 598–618 (PSAKRQSWHQTPDFTPTKYKE) and 666–695 (KVNAEETKKAEENASQEEEEAAEDEGGEED). Phosphoserine occurs at positions 599 and 604. The segment at residues 612-671 (TPTKYKERAPEQLRALESSFAQNPLPLDEELDRLRSETKMTRREIDSWFSERRKKVNAEE) is a DNA-binding region (homeobox 3). The span at 666 to 677 (KVNAEETKKAEE) shows a compositional bias: basic and acidic residues. The segment covering 679–695 (ASQEEEEAAEDEGGEED) has biased composition (acidic residues). Residues serine 680, serine 708, and serine 723 each carry the phosphoserine modification. 2 DNA-binding regions (homeobox) span residues 764–823 (PGKV…KNGQ) and 835–894 (FPPG…TRAV). The segment at 890 to 956 (ETRAVADTGS…PQAGRQLETD (67 aa)) is disordered. A phosphoserine mark is found at serine 927 and serine 946.

The protein belongs to the ZHX family. In terms of assembly, homodimer (via homeobox domain 1). Heterodimer with ZHX1 (via homeobox domain 1). Heterodimer with ZHX2 (via homeobox domain 1). Heterodimerization with ZHX1 is a prerequisite for repressor activity. Interacts with NFYA. Widely expressed. High expression in kidney. Expressed during osteogenic differentiation.

Its subcellular location is the nucleus. Its function is as follows. Acts as a transcriptional repressor. Involved in the early stages of mesenchymal stem cell (MSC) osteogenic differentiation. Is a regulator of podocyte gene expression during primary glomerula disease. Binds to promoter DNA. The protein is Zinc fingers and homeoboxes protein 3 (ZHX3) of Homo sapiens (Human).